Consider the following 1707-residue polypeptide: Mediator of DNA damage checkpoint protein 1 (1707 aa).

The segment at 1–23 (MESTQVIDWDAEEEEETELSSGS) is disordered. The tract at residues 1–150 (MESTQVIDWD…PRSLLTIEKT (150 aa)) is interaction with CHEK2. The tract at residues 2-222 (ESTQVIDWDA…SSPFGLGSDT (221 aa)) is interaction with the MRN complex. Thr-4 is subject to Phosphothreonine. Over residues 9–18 (WDAEEEEETE) the composition is skewed to acidic residues. In terms of domain architecture, FHA spans 54 to 105 (NVVGRSPDCSVALPFPSISKQHAVIEISAWNKAPILQDCGSLNGTQIVKPPR). Residue Thr-146 is modified to Phosphothreonine. Residues 166–328 (ADSEEEGDFP…EERIPVTPPV (163 aa)) are disordered. A phosphoserine mark is found at Ser-168 and Ser-176. Over residues 183–192 (GQRNTASPSA) the composition is skewed to polar residues. A phosphoserine mark is found at Ser-198 and Ser-220. A Phosphothreonine modification is found at Thr-222. Over residues 252–263 (ANGTTAGIQAQP) the composition is skewed to polar residues. A compositionally biased stretch (basic and acidic residues) spans 264-278 (TEHKLKDTKVKKEAG). Ser-298 carries the post-translational modification Phosphoserine. Thr-300 bears the Phosphothreonine mark. A Phosphoserine modification is found at Ser-313. Residue Thr-315 is modified to Phosphothreonine. Position 360 is a phosphoserine (Ser-360). Thr-362 bears the Phosphothreonine mark. The segment covering 369–378 (ALDVPLERNH) has biased composition (basic and acidic residues). The tract at residues 369 to 398 (ALDVPLERNHTPMVINSDTDEEEEEEEEVS) is disordered. Position 385 is a phosphoserine (Ser-385). Residues 386-397 (DTDEEEEEEEEV) are compositionally biased toward acidic residues. Position 387 is a phosphothreonine (Thr-387). Phosphoserine is present on residues Ser-398, Ser-415, Ser-425, Ser-438, and Ser-442. Disordered regions lie at residues 417–497 (DPGA…PGSH), 520–642 (PGPS…AKEC), 679–699 (LFPC…QTPG), and 718–746 (REQS…HQHL). Residues 425–439 (SQPQVLVEQSQSASG) show a composition bias toward polar residues. Phosphothreonine is present on Thr-444. At Ser-461 the chain carries Phosphoserine. Position 470 is a phosphothreonine (Thr-470). Ser-492, Ser-493, Ser-591, Ser-593, and Ser-595 each carry phosphoserine. The span at 580 to 595 (VSEQESTLEVRSQSGS) shows a compositional bias: polar residues. A compositionally biased stretch (basic and acidic residues) spans 626-642 (GREREAHVGRTKSAKEC). Residues 719–730 (EQSETSELHEAH) are compositionally biased toward basic and acidic residues. Ser-735 and Ser-750 each carry phosphoserine. Position 769 is an N6-acetyllysine (Lys-769). Composition is skewed to basic and acidic residues over residues 778-804 (ADRM…RDVI), 812-868 (TKDR…REWE), and 875-889 (TPDR…HDQK). Disordered regions lie at residues 778–899 (ADRM…TLKP) and 914–1510 (IITG…QETA). Ser-885, Ser-929, and Ser-962 each carry phosphoserine. The segment covering 968–986 (STQSLLTSQSQKQSTPQPL) has biased composition (low complexity). Residue Ser-991 is modified to Phosphoserine. 3 stretches are compositionally biased toward polar residues: residues 1026–1056 (PNTT…STRT), 1068–1086 (QPST…SQVT), and 1101–1113 (EIQS…QSVT). At Thr-1056 the chain carries Phosphothreonine. Ser-1104, Ser-1126, and Ser-1128 each carry phosphoserine. Phosphothreonine occurs at positions 1132, 1173, and 1234. 4 stretches are compositionally biased toward polar residues: residues 1225-1241 (PLTS…TSRA), 1265-1281 (PSTS…SSQA), 1295-1308 (VPTT…TSKK), and 1317-1326 (LVTQGRTYKP). Phosphothreonine occurs at positions 1297 and 1298. Ser-1327 carries the post-translational modification Phosphoserine. A compositionally biased stretch (polar residues) spans 1343–1363 (PSTSTDHLVTPKVTDQSLTLQ). Position 1352 is a phosphothreonine (Thr-1352). Ser-1359 carries the phosphoserine modification. The span at 1364–1376 (SSPLSASPVSSTP) shows a compositional bias: low complexity. Thr-1375 is subject to Phosphothreonine. Residues 1378–1393 (LKPPVPIAQPVTPEPI) show a composition bias toward pro residues. Residue Lys-1418 forms a Glycyl lysine isopeptide (Lys-Gly) (interchain with G-Cter in SUMO2) linkage. The segment covering 1421–1441 (SALSEPEPQSSASQSSGASEA) has biased composition (low complexity). Residues Ser-1435, Ser-1436, Ser-1439, and Ser-1443 each carry the phosphoserine modification. The span at 1459 to 1473 (VIKEEPVETEVKEEP) shows a compositional bias: basic and acidic residues. A Glycyl lysine isopeptide (Lys-Gly) (interchain with G-Cter in SUMO1); alternate cross-link involves residue Lys-1461. Lys-1461 is covalently cross-linked (Glycyl lysine isopeptide (Lys-Gly) (interchain with G-Cter in SUMO2); alternate). Residue Thr-1480 is modified to Phosphothreonine. Residues 1481 to 1493 (PEKRKRDHAEEVT) are compositionally biased toward basic and acidic residues. Lys-1496 is subject to N6-acetyllysine. 2 BRCT domains span residues 1510–1588 (APKV…DYLV) and 1609–1700 (RERR…FVLS).

Homodimer. Interacts with H2AX, which requires phosphorylation of H2AX on 'Ser-139'. Interacts with the MRN complex, composed of MRE11, RAD50, and NBN. Interacts with CHEK2, which requires ATM-mediated phosphorylation of 'Thr-68' within the FHA domain of CHEK2. Interacts constitutively with the BRCA1-BARD1 complex, SMC1A and TP53BP1. Interacts with ATM and FANCD2, and these interactions are reduced upon DNA damage. Also interacts with the PRKDC complex, composed of XRCC6/KU70, XRCC5/KU80 and PRKDC/XRCC7. This interaction may be required for PRKDC autophosphorylation, which is essential for DNA double strand break (DSB) repair. When phosphorylated by ATM, interacts with RNF8 (via FHA domain). Interacts with CEP164. When phosphorylated, interacts with APTX (via FHA-like domain). Interacts (when phosphorylated) with TOPBP1; promoting TOPBP1 localization to DNA damage sites during mitosis. Interacts (when phosphorylated) with NBN; promoting NBN and MRN complex localization to DNA damage sites. Phosphorylated upon exposure to ionizing radiation (IR), ultraviolet radiation (UV), and hydroxyurea (HU). Phosphorylation in response to IR requires ATM, NBN, and possibly CHEK2. Also phosphorylated during the G2/M phase of the cell cycle and during activation of the mitotic spindle checkpoint. Phosphorylation at Thr-4 by ATM stabilizes and enhances homodimerization via the FHA domain. Phosphorylated at Ser-168 and Ser-198 by CK2 in response to DNA damage during mitosis, promoting interaction with TOPBP1. Phosphorylated by CK2 in response to DNA damage, promoting interaction with NBN and recruitment of the MRN complex to DNA damage sites. Post-translationally, sumoylation at Lys-1461 by PIAS4 following DNA damage promotes ubiquitin-mediated degradation. In terms of processing, ubiquitinated by RNF4, leading to proteasomal degradation; undergoes 'Lys-48'-linked polyubiquitination.

Its subcellular location is the nucleus. It localises to the chromosome. Functionally, histone reader protein required for checkpoint-mediated cell cycle arrest in response to DNA damage within both the S phase and G2/M phases of the cell cycle. Specifically recognizes and binds histone H2AX phosphorylated at 'Ser-139', a marker of DNA damage, serving as a scaffold for the recruitment of DNA repair and signal transduction proteins to discrete foci of DNA damage sites. Also required for downstream events subsequent to the recruitment of these proteins. These include phosphorylation and activation of the ATM, CHEK1 and CHEK2 kinases, and stabilization of TP53/p53 and apoptosis. ATM and CHEK2 may also be activated independently by a parallel pathway mediated by TP53BP1. Required for chromosomal stability during mitosis by promoting recruitment of TOPBP1 to DNA double strand breaks (DSBs): TOPBP1 forms filamentous assemblies that bridge MDC1 and tether broken chromosomes during mitosis. Required for the repair of DSBs via homologous recombination by promoting recruitment of NBN component of the MRN complex to DSBs. This Mus musculus (Mouse) protein is Mediator of DNA damage checkpoint protein 1 (Mdc1).